Here is a 155-residue protein sequence, read N- to C-terminus: dCTP deaminase (155 aa).

DCTP contacts are provided by residues 79 to 84, Asp-95, Gln-124, and Tyr-138; that span reads RSSLAR.

Belongs to the dCTP deaminase family. As to quaternary structure, homotrimer.

The enzyme catalyses dCTP + H2O + H(+) = dUTP + NH4(+). It participates in pyrimidine metabolism; dUMP biosynthesis; dUMP from dCTP (dUTP route): step 1/2. Functionally, catalyzes the deamination of dCTP to dUTP. In Thermococcus kodakarensis (strain ATCC BAA-918 / JCM 12380 / KOD1) (Pyrococcus kodakaraensis (strain KOD1)), this protein is dCTP deaminase.